A 185-amino-acid chain; its full sequence is Adenylate kinase (185 aa).

ATP is bound at residue 8-16 (GIPGSGSTT).

This sequence belongs to the archaeal adenylate kinase family.

It localises to the cytoplasm. It carries out the reaction AMP + ATP = 2 ADP. The protein is Adenylate kinase (adkA) of Methanothermobacter thermautotrophicus (strain ATCC 29096 / DSM 1053 / JCM 10044 / NBRC 100330 / Delta H) (Methanobacterium thermoautotrophicum).